Here is a 258-residue protein sequence, read N- to C-terminus: L-aminoadipate-semialdehyde dehydrogenase-phosphopantetheinyl transferase (258 aa).

The protein belongs to the P-Pant transferase superfamily. AcpS family.

It localises to the cytoplasm. The protein resides in the nucleus. It carries out the reaction apo-[ACP] + CoA = holo-[ACP] + adenosine 3',5'-bisphosphate + H(+). In terms of biological role, catalyzes the transfer of a 4'-phosphopantetheine moiety from coenzyme A to a serine residue of acceptor proteins, such as alpha-aminoadipate reductase. Necessary for alpha-aminoadipate reductase activity. The polypeptide is L-aminoadipate-semialdehyde dehydrogenase-phosphopantetheinyl transferase (lys7) (Schizosaccharomyces pombe (strain 972 / ATCC 24843) (Fission yeast)).